A 220-amino-acid polypeptide reads, in one-letter code: Putative F-box protein At3g20705 (220 aa).

The region spanning 1–51 (MMMMSNLPNDLVEEILSRVTVTFMRTVRSICKKWNALTKDRSFTNKYIRNI) is the F-box domain.

This chain is Putative F-box protein At3g20705, found in Arabidopsis thaliana (Mouse-ear cress).